A 607-amino-acid chain; its full sequence is Elongation factor 4 (607 aa).

One can recognise a tr-type G domain in the interval 11-193; it reads SKIRNFSIIA…QIVEKVPAPT (183 aa). GTP contacts are provided by residues 23-28 and 140-143; these read DHGKST and NKID.

This sequence belongs to the TRAFAC class translation factor GTPase superfamily. Classic translation factor GTPase family. LepA subfamily.

The protein localises to the cell membrane. It catalyses the reaction GTP + H2O = GDP + phosphate + H(+). Required for accurate and efficient protein synthesis under certain stress conditions. May act as a fidelity factor of the translation reaction, by catalyzing a one-codon backward translocation of tRNAs on improperly translocated ribosomes. Back-translocation proceeds from a post-translocation (POST) complex to a pre-translocation (PRE) complex, thus giving elongation factor G a second chance to translocate the tRNAs correctly. Binds to ribosomes in a GTP-dependent manner. The chain is Elongation factor 4 from Bacillus cereus (strain Q1).